The chain runs to 579 residues: Vitamin B6 transporter TPN1 (579 aa).

Residues 1–98 (MNRDNMDTTK…LHVAGLWLSA (98 aa)) are Cytoplasmic-facing. A helical transmembrane segment spans residues 99-119 (TGGLSSMSSFLLGPLLFGLSF). The Extracellular segment spans residues 120–122 (RES). A helical transmembrane segment spans residues 123–143 (VASSLISVTIGCLIAAYCSIM). Over 144–157 (GPQSGCRQMVTARY) the chain is Cytoplasmic. A helical membrane pass occupies residues 158 to 178 (LFGWWFVKLVALASIIGVMGW). At 179-198 (SVVNSVVGGEMLAAISNDKV) the chain is on the extracellular side. The helical transmembrane segment at 199 to 219 (PLWVGIVIVTVCSFLVAIFGI) threads the bilayer. At 220–221 (KQ) the chain is on the cytoplasmic side. A helical transmembrane segment spans residues 222–242 (VIKVETYLSVPVLTAFLLLYI). Over 243 to 274 (SSSDKYSFVNAYVSKGNLDSSTRKGNWMSFFS) the chain is Extracellular. A helical transmembrane segment spans residues 275 to 295 (LCYSITATWGSITADYYILFP). Residues 296–302 (EDTPYIQ) are Cytoplasmic-facing. The helical transmembrane segment at 303 to 323 (IFCLTFFGTFLPTCFVGILGL) threads the bilayer. Over 324–362 (LLASVAMSYKPWSVEYDSHGMGGLLWAGFQRWNGFGKFC) the chain is Extracellular. Residues 363 to 383 (VVVLVFSLVSNNIINTYSAAF) traverse the membrane as a helical segment. The Cytoplasmic portion of the chain corresponds to 384-394 (SIQLSSVFCAK). A helical membrane pass occupies residues 395–415 (IPRWFWSIVCTIICLVCALIG). Over 416-421 (RNHFST) the chain is Extracellular. A helical membrane pass occupies residues 422-442 (ILGNFLPMIGYWISMYFILLF). The Cytoplasmic portion of the chain corresponds to 443-519 (EENLVFRRFF…EVLTHGYAAT (77 aa)). The helical transmembrane segment at 520–540 (FAFIVGVAGVVVGMAQAYWIG) threads the bilayer. At 541-545 (PIAAK) the chain is on the extracellular side. The helical transmembrane segment at 546–566 (FGEYGGDVAMWLSMAFSGVVY) threads the bilayer. The Cytoplasmic portion of the chain corresponds to 567–579 (PPCRYLELRKFGR).

The protein belongs to the purine-cytosine permease (2.A.39) family.

Its subcellular location is the membrane. Thiamine-regulated, high affinity import carrier of pyridoxine, pyridoxal and pyridoxamine. The sequence is that of Vitamin B6 transporter TPN1 (TPN1) from Saccharomyces cerevisiae (strain ATCC 204508 / S288c) (Baker's yeast).